A 265-amino-acid polypeptide reads, in one-letter code: 4-hydroxy-tetrahydrodipicolinate reductase (265 aa).

Residues 7–12 (GASGRM) and D33 contribute to the NAD(+) site. R34 is an NADP(+) binding site. NAD(+) is bound by residues 96-98 (GTT) and 120-123 (AANM). H153 serves as the catalytic Proton donor/acceptor. Residue H154 participates in (S)-2,3,4,5-tetrahydrodipicolinate binding. Catalysis depends on K157, which acts as the Proton donor. 163–164 (GT) provides a ligand contact to (S)-2,3,4,5-tetrahydrodipicolinate.

It belongs to the DapB family.

The protein resides in the cytoplasm. The catalysed reaction is (S)-2,3,4,5-tetrahydrodipicolinate + NAD(+) + H2O = (2S,4S)-4-hydroxy-2,3,4,5-tetrahydrodipicolinate + NADH + H(+). The enzyme catalyses (S)-2,3,4,5-tetrahydrodipicolinate + NADP(+) + H2O = (2S,4S)-4-hydroxy-2,3,4,5-tetrahydrodipicolinate + NADPH + H(+). It participates in amino-acid biosynthesis; L-lysine biosynthesis via DAP pathway; (S)-tetrahydrodipicolinate from L-aspartate: step 4/4. Functionally, catalyzes the conversion of 4-hydroxy-tetrahydrodipicolinate (HTPA) to tetrahydrodipicolinate. In Burkholderia multivorans (strain ATCC 17616 / 249), this protein is 4-hydroxy-tetrahydrodipicolinate reductase.